The primary structure comprises 300 residues: Porphobilinogen deaminase (300 aa).

S-(dipyrrolylmethanemethyl)cysteine is present on cysteine 242.

Belongs to the HMBS family. In terms of assembly, monomer. Dipyrromethane is required as a cofactor.

It carries out the reaction 4 porphobilinogen + H2O = hydroxymethylbilane + 4 NH4(+). It participates in porphyrin-containing compound metabolism; protoporphyrin-IX biosynthesis; coproporphyrinogen-III from 5-aminolevulinate: step 2/4. In terms of biological role, tetrapolymerization of the monopyrrole PBG into the hydroxymethylbilane pre-uroporphyrinogen in several discrete steps. The chain is Porphobilinogen deaminase from Rickettsia bellii (strain OSU 85-389).